Here is a 210-residue protein sequence, read N- to C-terminus: Glutathione S-transferase P (210 aa).

In terms of domain architecture, GST N-terminal spans Pro-2–Gly-81. Tyr-4 carries the phosphotyrosine; by EGFR modification. Residues Tyr-8, Arg-14, Trp-39, Lys-45, and Gln-52–Leu-53 contribute to the glutathione site. Residue Thr-62 is modified to Phosphothreonine. Gln-65 to Ser-66 is a binding site for glutathione. The GST C-terminal domain maps to Asp-83–Ile-204. Lys-103 and Lys-116 each carry N6-succinyllysine. N6-acetyllysine is present on Lys-128. The residue at position 199 (Tyr-199) is a Phosphotyrosine; by EGFR.

The protein belongs to the GST superfamily. Pi family. As to quaternary structure, homodimer. Interacts with CDK5.

It localises to the cytoplasm. It is found in the mitochondrion. The protein resides in the nucleus. The catalysed reaction is RX + glutathione = an S-substituted glutathione + a halide anion + H(+). It catalyses the reaction prostaglandin J2 + glutathione = prostaglandin J2-S-(R)-glutathione. It carries out the reaction prostaglandin J2 + glutathione = prostaglandin J2-S-(S)-glutathione. The enzyme catalyses prostaglandin A2 + glutathione = prostaglandin A2-S-(S)-glutathione. The catalysed reaction is 11(S)-hydroxy-14(S),15(S)-epoxy-(5Z,8Z,12E)-eicosatrienoate + glutathione = (11S,15S)-dihydroxy-14(R)-S-glutathionyl-(5Z,8Z,12E)-eicosatrienoate. Its function is as follows. Conjugation of reduced glutathione to a wide number of exogenous and endogenous hydrophobic electrophiles. Involved in the formation of glutathione conjugates of both prostaglandin A2 (PGA2) and prostaglandin J2 (PGJ2). Participates in the formation of novel hepoxilin regioisomers. Negatively regulates CDK5 activity via p25/p35 translocation to prevent neurodegeneration. The chain is Glutathione S-transferase P from Homo sapiens (Human).